A 426-amino-acid chain; its full sequence is Glutamate-1-semialdehyde 2,1-aminomutase (426 aa).

Lys265 carries the N6-(pyridoxal phosphate)lysine modification.

Belongs to the class-III pyridoxal-phosphate-dependent aminotransferase family. HemL subfamily. Homodimer. Pyridoxal 5'-phosphate serves as cofactor.

It localises to the cytoplasm. The catalysed reaction is (S)-4-amino-5-oxopentanoate = 5-aminolevulinate. It participates in porphyrin-containing compound metabolism; protoporphyrin-IX biosynthesis; 5-aminolevulinate from L-glutamyl-tRNA(Glu): step 2/2. This chain is Glutamate-1-semialdehyde 2,1-aminomutase, found in Escherichia coli O157:H7.